The primary structure comprises 552 residues: MNATAAQTKSLEWLNRLRANPKIPLIVAGSAAVAVMVALILWAKAPDYRTLFSNLSDQDGGAIVSQLTQMNIPYRFSEASGAIEVPADKVHELRLRLAQQGLPKGGAVGFELLDQEKFGISQFSEQVNYQRALEGELSRTIETIGPVKGARVHLAMPKPSLFVREQKSPSASVTVNLLPGRALDEGQISAIVHLVSSAVAGLPPGNVTLVDQGGHLLTQSNTSGRDLNDAQLKYASDVEGRIQRRIEAILSPIVGNGNIHAQVTAQLDFASKEQTEEQYRPNGDESHAALRSRQLNESEQSGSGYPGGVPGALSNQPAPANNAPISTPPANQNNRQQQASTTSNSGPRSTQRNETSNYEVDRTIRHTKMNVGDVQRLSVAVVVNYKTLPDGKPLPLSNEQMKQIEDLTREAMGFSEKRGDSLNVVNSPFNSSDESGGELPFWQQQAFIDQLLAAGRWLLVLLVAWLLWRKAVRPQLTRRAEAMKAVQQQAQAREEVEDAVEVRLSKDEQLQQRRANQRLGAEVMSQRIREMSDNDPRVVALVIRQWINNDHE.

Residues 23–43 (IPLIVAGSAAVAVMVALILWA) form a helical membrane-spanning segment. Residues 272 to 288 (KEQTEEQYRPNGDESHA) are compositionally biased toward basic and acidic residues. A disordered region spans residues 272–362 (KEQTEEQYRP…NETSNYEVDR (91 aa)). Composition is skewed to polar residues over residues 293 to 303 (RQLNESEQSGS) and 313 to 325 (LSNQPAPANNAPI). Residues 328 to 345 (PPANQNNRQQQASTTSNS) are compositionally biased toward low complexity. The segment covering 346-358 (GPRSTQRNETSNY) has biased composition (polar residues). A helical membrane pass occupies residues 447–467 (FIDQLLAAGRWLLVLLVAWLL).

It belongs to the FliF family. In terms of assembly, the basal body constitutes a major portion of the flagellar organelle and consists of four rings (L,P,S, and M) mounted on a central rod. The M ring is integral to the inner membrane of the cell and may be connected to the flagellar rod via the S ring. The S (supramembrane ring) lies just distal to the M ring. The L and P rings lie in the outer membrane and the periplasmic space, respectively.

The protein localises to the cell inner membrane. The protein resides in the bacterial flagellum basal body. The M ring may be actively involved in energy transduction. The sequence is that of Flagellar M-ring protein (fliF) from Escherichia coli (strain K12).